The sequence spans 185 residues: Elongation factor P 1 (185 aa).

It belongs to the elongation factor P family.

The protein resides in the cytoplasm. It participates in protein biosynthesis; polypeptide chain elongation. In terms of biological role, involved in peptide bond synthesis. Stimulates efficient translation and peptide-bond synthesis on native or reconstituted 70S ribosomes in vitro. Probably functions indirectly by altering the affinity of the ribosome for aminoacyl-tRNA, thus increasing their reactivity as acceptors for peptidyl transferase. The polypeptide is Elongation factor P 1 (efp1) (Chlamydia trachomatis serovar D (strain ATCC VR-885 / DSM 19411 / UW-3/Cx)).